A 792-amino-acid polypeptide reads, in one-letter code: Xaa-Pro dipeptidyl-peptidase (792 aa).

Active-site charge relay system residues include serine 363, aspartate 482, and histidine 513.

The protein belongs to the peptidase S15 family. Homodimer.

The protein resides in the cytoplasm. It catalyses the reaction Hydrolyzes Xaa-Pro-|- bonds to release unblocked, N-terminal dipeptides from substrates including Ala-Pro-|-p-nitroanilide and (sequentially) Tyr-Pro-|-Phe-Pro-|-Gly-Pro-|-Ile.. Removes N-terminal dipeptides sequentially from polypeptides having unsubstituted N-termini provided that the penultimate residue is proline. The protein is Xaa-Pro dipeptidyl-peptidase of Lactobacillus delbrueckii subsp. bulgaricus (strain ATCC 11842 / DSM 20081 / BCRC 10696 / JCM 1002 / NBRC 13953 / NCIMB 11778 / NCTC 12712 / WDCM 00102 / Lb 14).